The sequence spans 599 residues: rRNA (cytosine-C(5))-methyltransferase NOP2C (599 aa).

A PUA domain is found at 158–265; it reads PKEVLVSRKC…IAVDLNHRVF (108 aa). S-adenosyl-L-methionine is bound by residues 304–310, D328, and D355; that span reads CAAPGGK. A disordered region spans residues 372–454; the sequence is LINGDNSSSM…GGRAGKSQGF (83 aa). The span at 378 to 388 shows a compositional bias: low complexity; sequence SSSMTSHSELS. Positions 399-412 are enriched in basic and acidic residues; it reads RRSEADKSCEKNDS. Positions 413–424 are enriched in polar residues; sequence TEQPNGGDNVSQ. The segment covering 428–438 has biased composition (basic residues); it reads RKNKGRLKNGR. D465 serves as a coordination point for S-adenosyl-L-methionine. C516 serves as the catalytic Nucleophile.

It belongs to the class I-like SAM-binding methyltransferase superfamily. RsmB/NOP family.

It localises to the nucleus. The protein resides in the nucleolus. It catalyses the reaction a cytidine in rRNA + S-adenosyl-L-methionine = a 5-methylcytidine in rRNA + S-adenosyl-L-homocysteine + H(+). In terms of biological role, involved in ribosomal large subunit assembly. S-adenosyl-L-methionine-dependent methyltransferase that may methylates the C(5) position of cytosine in rRNA. May play a role in the regulation of the cell cycle and the increased nucleolar activity that is associated with the cell proliferation. Seems involved in the regulation of cell proliferation. The polypeptide is rRNA (cytosine-C(5))-methyltransferase NOP2C (Arabidopsis thaliana (Mouse-ear cress)).